Reading from the N-terminus, the 147-residue chain is Effector TSP1 (147 aa).

The N-terminal stretch at 1 to 19 (MQITKTLVATLFAASTAFA) is a signal peptide. Intrachain disulfides connect C44–C51 and C67–C87.

As to quaternary structure, homodimer.

It is found in the secreted. Its function is as follows. Stimulates salicylic acid signaling in host plant roots. This chain is Effector TSP1, found in Hypocrea virens (strain Gv29-8 / FGSC 10586) (Gliocladium virens).